The sequence spans 727 residues: Long-chain-fatty-acid--[acyl-carrier-protein] ligase AEE15, chloroplastic (727 aa).

A chloroplast-targeting transit peptide spans 1–66 (MQIRLKPDYS…PSFRRFRVHC (66 aa)).

This sequence belongs to the ATP-dependent AMP-binding enzyme family.

The protein localises to the plastid. It localises to the chloroplast. It carries out the reaction a long-chain fatty acid + holo-[ACP] + ATP = a long-chain fatty acyl-[ACP] + AMP + diphosphate. Its function is as follows. Probably involved in the activation of fatty acids to acyl-carrier-protein prior to fatty acid elongation in plastids. Acts on medium- to long-chain fatty acids. This chain is Long-chain-fatty-acid--[acyl-carrier-protein] ligase AEE15, chloroplastic (AAE15), found in Arabidopsis thaliana (Mouse-ear cress).